Reading from the N-terminus, the 170-residue chain is MEIDIPKSHKIDTEELSPWISYKKFIDDKTIGYYCVRDQVVIAYKKAYIQDKWDHEKSLINSRLTSYYETVIIELEIPKKSIIVKPKDFKTSGYRTNIAIVRDIFRLKNSQSITESRIFPDIVCFSKYNFGYVYEIGQAAIPSERLETDLDNPLGPGIYFWLDEEKAIQY.

It belongs to the mimivirus L223/L227/L812 family.

This is an uncharacterized protein from Acanthamoeba polyphaga mimivirus (APMV).